A 494-amino-acid chain; its full sequence is MENLSERFNVLQDQLMNIYEAAEHTLETQIAHWTLLRREAVLLYYARQKGITRLGYQPVPTLAVSEAKAKEAIGIMLQLQSLQKSEYASENWTLVDTSAETYNNVPEHHFKKGPVPVEVIYDKEPENANVYTMWKYVYYMDPEDVWHKTTSGVNQTGIYYLHGDFKHYYVLFADGARMYSKTGQWEVKVNKETVFAPVTSSTPPGSPGQRDPDATSKTPATSSDSTTRSSDKQSQQADPRRKGYGRRPSSRTRRQETQQRRSRSRYRSQSNSRSRSQSQTRALGATSVSRSSRSPSVTQIRNRRSRSQSRGRGGRGSSTDTTTKRRRSRSSSSNTRKRSQRGERGRGERGGRGKRRDRSSSTSPTPKRSRAGSRSSRQRGVSPEQVGRSLQSVSSKHRGRLGRLLEEALDPPVIICKGGANTLKCFRNRARHKYTGLFKAFSTTWSWVAGDSTERLGRPRMLISFTSTNQRKDFDETVKYPKGVETAYGNLDSL.

The transactivation domain stretch occupies residues 1-201; that stretch reads MENLSERFNV…ETVFAPVTSS (201 aa). Residues 196–397 are disordered; sequence APVTSSTPPG…RSLQSVSSKH (202 aa). A compositionally biased stretch (low complexity) spans 221 to 236; the sequence is TSSDSTTRSSDKQSQQ. Residues 242–252 are compositionally biased toward basic residues; the sequence is KGYGRRPSSRT. Over residues 267–297 the composition is skewed to low complexity; sequence RSQSNSRSRSQSQTRALGATSVSRSSRSPSV. 2 stretches are compositionally biased toward basic residues: residues 301–313 and 324–339; these read RNRRSRSQSRGRG and KRRRSRSSSSNTRKRS. The span at 340–351 shows a compositional bias: basic and acidic residues; it reads QRGERGRGERGG. The span at 360–382 shows a compositional bias: low complexity; the sequence is SSTSPTPKRSRAGSRSSRQRGVS. Positions 410-494 are DNA-binding domain; the sequence is DPPVIICKGG…ETAYGNLDSL (85 aa). Lys-417 is covalently cross-linked (Glycyl lysine isopeptide (Lys-Gly) (interchain with G-Cter in SUMO)).

Belongs to the papillomaviridae E2 protein family. Binds DNA as homodimer. Interacts with protein E1; this interaction greatly increases E1 DNA-binding activity. Interacts with protein L1; this interaction enhances E2-dependent replication and transcription activation. Interacts with protein L2; this interaction inhibits E2 transcriptional activity but not DNA replication function E2. Interacts with protein E7; this interaction inhibits E7 oncogenic activity. Interacts with host TAF1; this interaction modulates E2-dependent transcriptional regulation. Interacts with host BRD4; this interaction mediates E2 transcriptional activation function. Additionally, the interaction with host BRD4 on mitotic chromosomes mediates tethering of the viral genome. Interacts with host TOPBP1; this interaction is required for optimal viral DNA replication. In terms of processing, phosphorylated. Sumoylation plays a regulatory role in E2 transcriptional activity.

The protein resides in the host nucleus. Plays a role in the initiation of viral DNA replication. A dimer of E2 interacts with a dimer of E1 in order to improve specificity of E1 DNA binding activity. Once the complex recognizes and binds DNA at specific sites, the E2 dimer is removed from DNA. E2 also regulates viral transcription through binding to the E2RE response element (5'-ACCNNNNNNGGT-3') present in multiple copies in the regulatory regions of the viral genome. Activates or represses transcription depending on E2RE's position with regards to proximal promoter elements including the TATA-box. Repression occurs by sterically hindering the assembly of the transcription initiation complex. This Human papillomavirus 12 protein is Regulatory protein E2.